A 379-amino-acid polypeptide reads, in one-letter code: Chaperone protein DnaJ (379 aa).

In terms of domain architecture, J spans 5–70; it reads DYYEVLGLSK…EKKAMYDQYG (66 aa). The segment at 136–214 adopts a CR-type zinc-finger fold; that stretch reads GCKKDIRIHT…CHGDGRVHKA (79 aa). 8 residues coordinate Zn(2+): C149, C152, C166, C169, C188, C191, C202, and C205. CXXCXGXG motif repeat units follow at residues 149–156, 166–173, 188–195, and 202–209; these read CDTCHGTG, CSHCHGSG, CPSCHGTG, and CRSCHGDG.

This sequence belongs to the DnaJ family. In terms of assembly, homodimer. It depends on Zn(2+) as a cofactor.

Its subcellular location is the cytoplasm. Functionally, participates actively in the response to hyperosmotic and heat shock by preventing the aggregation of stress-denatured proteins and by disaggregating proteins, also in an autonomous, DnaK-independent fashion. Unfolded proteins bind initially to DnaJ; upon interaction with the DnaJ-bound protein, DnaK hydrolyzes its bound ATP, resulting in the formation of a stable complex. GrpE releases ADP from DnaK; ATP binding to DnaK triggers the release of the substrate protein, thus completing the reaction cycle. Several rounds of ATP-dependent interactions between DnaJ, DnaK and GrpE are required for fully efficient folding. Also involved, together with DnaK and GrpE, in the DNA replication of plasmids through activation of initiation proteins. This Mannheimia haemolytica (Pasteurella haemolytica) protein is Chaperone protein DnaJ.